Reading from the N-terminus, the 379-residue chain is Presenilin-associated rhomboid-like protein, mitochondrial (379 aa).

The N-terminal 52 residues, M1 to G52, are a transit peptide targeting the mitochondrion. The Mitochondrial matrix segment spans residues F53 to P101. S65 is modified (phosphoserine). Phosphothreonine is present on T69. Residue S70 is modified to Phosphoserine. Residues L102–Y121 traverse the membrane as a helical segment. The Mitochondrial intermembrane segment spans residues E122–R167. The chain crosses the membrane as a helical span at residues T168–S187. The Mitochondrial matrix segment spans residues L188 to S207. A helical transmembrane segment spans residues P208–W230. The Mitochondrial intermembrane segment spans residues S231 to Q244. A helical membrane pass occupies residues F245–V262. At G263–S273 the chain is on the mitochondrial matrix side. The chain crosses the membrane as a helical span at residues L274–P292. The active-site Nucleophile is S277. Residues E293–R295 are Mitochondrial intermembrane-facing. A helical membrane pass occupies residues L296–M318. Over D319–H332 the chain is Mitochondrial matrix. A helical transmembrane segment spans residues A333 to W354. Residue H335 is part of the active site. Over K355–K379 the chain is Mitochondrial intermembrane.

This sequence belongs to the peptidase S54 family. In terms of assembly, interacts with PSEN1 and PSEN2. Binds OPA1. P-beta is proteolytically processed (beta-cleavage) in a PARL-dependent manner.

Its subcellular location is the mitochondrion inner membrane. The protein resides in the nucleus. It carries out the reaction Cleaves type-1 transmembrane domains using a catalytic dyad composed of serine and histidine that are contributed by different transmembrane domains.. In terms of biological role, required for the control of apoptosis during postnatal growth. Essential for proteolytic processing of an antiapoptotic form of OPA1 which prevents the release of mitochondrial cytochrome c in response to intrinsic apoptotic signals. Required for the maturation of PINK1 into its 52kDa mature form after its cleavage by mitochondrial-processing peptidase (MPP). Promotes cleavage of serine/threonine-protein phosphatase PGAM5 in damaged mitochondria in response to loss of mitochondrial membrane potential. Mediates differential cleavage of PINK1 and PGAM5 depending on the health status of mitochondria, disassociating from PINK1 and associating with PGAM5 in response to mitochondrial membrane potential loss. Required for processing of CLPB into a form with higher protein disaggregase activity by removing an autoinhibitory N-terminal peptide. Promotes processing of DIABLO/SMAC in the mitochondrion which is required for DIABLO apoptotic activity. Also required for cleavage of STARD7 and TTC19. Promotes changes in mitochondria morphology regulated by phosphorylation of P-beta domain. The polypeptide is Presenilin-associated rhomboid-like protein, mitochondrial (PARL) (Pongo abelii (Sumatran orangutan)).